The following is a 68-amino-acid chain: DNA-directed RNA polymerase subunit omega (68 aa).

This sequence belongs to the RNA polymerase subunit omega family. In terms of assembly, the RNAP catalytic core consists of 2 alpha, 1 beta, 1 beta' and 1 omega subunit. When a sigma factor is associated with the core the holoenzyme is formed, which can initiate transcription.

It catalyses the reaction RNA(n) + a ribonucleoside 5'-triphosphate = RNA(n+1) + diphosphate. Its function is as follows. Promotes RNA polymerase assembly. Latches the N- and C-terminal regions of the beta' subunit thereby facilitating its interaction with the beta and alpha subunits. In Citrifermentans bemidjiense (strain ATCC BAA-1014 / DSM 16622 / JCM 12645 / Bem) (Geobacter bemidjiensis), this protein is DNA-directed RNA polymerase subunit omega.